We begin with the raw amino-acid sequence, 282 residues long: Pantothenate synthetase (282 aa).

30-37 (MGYLHEGH) serves as a coordination point for ATP. His37 (proton donor) is an active-site residue. (R)-pantoate is bound at residue Gln61. Beta-alanine is bound at residue Gln61. ATP is bound at residue 147–150 (GMKD). Residue Gln153 participates in (R)-pantoate binding. ATP is bound by residues Val176 and 184–187 (KSSR).

It belongs to the pantothenate synthetase family. Homodimer.

Its subcellular location is the cytoplasm. It carries out the reaction (R)-pantoate + beta-alanine + ATP = (R)-pantothenate + AMP + diphosphate + H(+). The protein operates within cofactor biosynthesis; (R)-pantothenate biosynthesis; (R)-pantothenate from (R)-pantoate and beta-alanine: step 1/1. Functionally, catalyzes the condensation of pantoate with beta-alanine in an ATP-dependent reaction via a pantoyl-adenylate intermediate. The protein is Pantothenate synthetase of Geobacillus sp. (strain WCH70).